Consider the following 530-residue polypeptide: MRQRQLFSVFLLLLAFVSFQKLCYCDDQTVLYESFDEPFDGRWIVSKNSDYEGVWKHAKSEGHEDYGLLVSEKARKYGIVKELDEPLNLKEGTVVLQYEVRFQEGLECGGAYLKYLRPQEAGWTPQGFDSESPYSIMFGPDKCGGTNKVHFILKHKNPKSGEYVEHHLKFPPSVPYDKLSHVYTAILKPDNEVRILVDGEEKKKANLLSGEDFEPALIPAKTIPDPEDKKPEDWDERAKIPDPNAVKPEDWDEDAPMEIEDEEAEKPEGWLDDEPEEVDDPEATKPEDWDDEEDGMWEAPKIDNPKCEAAPGCGEWKRPMKRNPAYKGKWSSPLIDNPAYKGIWKPRDIPNPDYFELDRPDYEPIAAIGIEIWTMQDGILFDNILIAKDEKVAETYRQTTWKPKFDVEKEKQKAEEEAAGSADGLKSYQKVVFDLLNKVADLSFLSAYKSKITELIEKAEQQPNLTIGVLVAIVVVFFSLFLKLIFGGKKAAAPVEKKKPEVAESSKSGDEAEKKEETAAPRKRQPRRDN.

The signal sequence occupies residues 1–20 (MRQRQLFSVFLLLLAFVSFQ). Residues 21 to 466 (KLCYCDDQTV…EKAEQQPNLT (446 aa)) are Lumenal-facing. Ca(2+) contacts are provided by Ser34 and Asp65. A disulfide bridge connects residues Cys108 and Cys143. 4 residues coordinate an alpha-D-glucoside: Tyr112, Lys114, Tyr134, and Asp141. A disordered region spans residues 216–315 (ALIPAKTIPD…KCEAAPGCGE (100 aa)). Residues 223 to 356 (IPDPEDKKPE…RDIPNPDYFE (134 aa)) are p domain (Extended arm). Residues 224–240 (PDPEDKKPEDWDERAKI) show a composition bias toward basic and acidic residues. 5 tandem repeats follow at residues 225–236 (DPEDKKPEDWDE), 242–253 (DPNAVKPEDWDE), 261–272 (DEEAEKPEGWLD), 280–291 (DPEATKPEDWDD), and 295–305 (GMWEAPKIDNP). 4 X approximate repeats regions lie at residues 225 to 291 (DPED…DWDD) and 295 to 352 (GMWE…IPNP). Over residues 250–281 (DWDEDAPMEIEDEEAEKPEGWLDDEPEEVDDP) the composition is skewed to acidic residues. A disulfide bridge links Cys307 with Cys313. 3 repeat units span residues 314 to 324 (GEWKRPMKRNP), 328 to 338 (GKWSSPLIDNP), and 342 to 352 (GIWKPRDIPNP). Residue Glu371 coordinates an alpha-D-glucoside. Asp382 lines the Ca(2+) pocket. Residue Asn464 is glycosylated (N-linked (GlcNAc...) asparagine). A helical transmembrane segment spans residues 467–487 (IGVLVAIVVVFFSLFLKLIFG). Topologically, residues 488–530 (GKKAAAPVEKKKPEVAESSKSGDEAEKKEETAAPRKRQPRRDN) are cytoplasmic. The tract at residues 490-530 (KAAAPVEKKKPEVAESSKSGDEAEKKEETAAPRKRQPRRDN) is disordered. Positions 495 to 520 (VEKKKPEVAESSKSGDEAEKKEETAA) are enriched in basic and acidic residues. A Phosphoserine modification is found at Ser508. A compositionally biased stretch (basic residues) spans 521 to 530 (PRKRQPRRDN).

The protein belongs to the calreticulin family.

It is found in the endoplasmic reticulum membrane. Its function is as follows. Calcium-binding protein that interacts with newly synthesized monoglucosylated glycoproteins in the endoplasmic reticulum. It may act in assisting protein assembly and/or in the retention within the ER of unassembled protein subunits. It seems to play a major role in the quality control apparatus of the ER by the retention of incorrectly folded proteins. The polypeptide is Calnexin homolog 1 (CNX1) (Arabidopsis thaliana (Mouse-ear cress)).